The primary structure comprises 368 residues: Quinolinate synthase (368 aa).

Positions 46 and 63 each coordinate iminosuccinate. Cysteine 110 contributes to the [4Fe-4S] cluster binding site. Residues 141–143 (YVN) and serine 162 each bind iminosuccinate. Position 230 (cysteine 230) interacts with [4Fe-4S] cluster. Iminosuccinate is bound by residues 256 to 258 (HPE) and threonine 273. Residue cysteine 320 coordinates [4Fe-4S] cluster.

This sequence belongs to the quinolinate synthase family. Type 3 subfamily. It depends on [4Fe-4S] cluster as a cofactor.

The protein resides in the cytoplasm. It carries out the reaction iminosuccinate + dihydroxyacetone phosphate = quinolinate + phosphate + 2 H2O + H(+). It functions in the pathway cofactor biosynthesis; NAD(+) biosynthesis; quinolinate from iminoaspartate: step 1/1. Functionally, catalyzes the condensation of iminoaspartate with dihydroxyacetone phosphate to form quinolinate. This Bacillus thuringiensis (strain Al Hakam) protein is Quinolinate synthase.